A 391-amino-acid chain; its full sequence is Argininosuccinate synthase (391 aa).

An ATP-binding site is contributed by 6-14 (AYSGGLDTT). An L-citrulline-binding site is contributed by Tyr-84. Gly-114 serves as a coordination point for ATP. 3 residues coordinate L-aspartate: Thr-116, Asn-120, and Asp-121. L-citrulline is bound at residue Asn-120. Residues Arg-124, Ser-171, Ser-180, Glu-253, and Tyr-265 each coordinate L-citrulline.

Belongs to the argininosuccinate synthase family. Type 1 subfamily. In terms of assembly, homotetramer.

Its subcellular location is the cytoplasm. It carries out the reaction L-citrulline + L-aspartate + ATP = 2-(N(omega)-L-arginino)succinate + AMP + diphosphate + H(+). Its pathway is amino-acid biosynthesis; L-arginine biosynthesis; L-arginine from L-ornithine and carbamoyl phosphate: step 2/3. This chain is Argininosuccinate synthase, found in Sulfolobus acidocaldarius (strain ATCC 33909 / DSM 639 / JCM 8929 / NBRC 15157 / NCIMB 11770).